Reading from the N-terminus, the 354-residue chain is S-adenosylmethionine:tRNA ribosyltransferase-isomerase (354 aa).

This sequence belongs to the QueA family. Monomer.

It localises to the cytoplasm. The catalysed reaction is 7-aminomethyl-7-carbaguanosine(34) in tRNA + S-adenosyl-L-methionine = epoxyqueuosine(34) in tRNA + adenine + L-methionine + 2 H(+). It participates in tRNA modification; tRNA-queuosine biosynthesis. Its function is as follows. Transfers and isomerizes the ribose moiety from AdoMet to the 7-aminomethyl group of 7-deazaguanine (preQ1-tRNA) to give epoxyqueuosine (oQ-tRNA). This Pseudomonas syringae pv. tomato (strain ATCC BAA-871 / DC3000) protein is S-adenosylmethionine:tRNA ribosyltransferase-isomerase.